Consider the following 144-residue polypeptide: Testis-specific protein TSX (144 aa).

Disordered regions lie at residues 1-21 (MSEKQSPKTSEAECSAMDLPE), 69-99 (EDRVSSTDDEDTCQAGCTEDDETSHSDRDID), and 120-144 (FTDQNPQADQDLEETESDGAMNPTD). The segment covering 75–90 (TDDEDTCQAGCTEDDE) has biased composition (acidic residues).

As to expression, testis.

Its function is as follows. May have an RNA/DNA binding role. The chain is Testis-specific protein TSX (Tsx) from Mus musculus (Mouse).